Reading from the N-terminus, the 62-residue chain is Cytochrome b-c1 complex subunit 6-2, mitochondrial (62 aa).

Intrachain disulfides connect C17-C59 and C31-C45.

The protein belongs to the UQCRH/QCR6 family. Component of the ubiquinol-cytochrome c oxidoreductase (cytochrome b-c1 complex, complex III, CIII), a multisubunit enzyme composed of 10 subunits. The complex is composed of 3 respiratory subunits cytochrome b (MT-CYB), cytochrome c1 (CYC1-1 or CYC1-2) and Rieske protein (UCR1-1 or UCR1-2), 2 core protein subunits MPPalpha1 (or MPPalpha2) and MPPB, and 5 low-molecular weight protein subunits QCR7-1 (or QCR7-2), UCRQ-1 (or UCRQ-2), QCR9, UCRY and probably QCR6-1 (or QCR6-2). The complex exists as an obligatory dimer and forms supercomplexes (SCs) in the inner mitochondrial membrane with NADH-ubiquinone oxidoreductase (complex I, CI), resulting in different assemblies (supercomplexes SCI(1)III(2) and SCI(2)III(4)).

It localises to the mitochondrion inner membrane. Its function is as follows. Component of the ubiquinol-cytochrome c oxidoreductase, a multisubunit transmembrane complex that is part of the mitochondrial electron transport chain which drives oxidative phosphorylation. The respiratory chain contains 3 multisubunit complexes succinate dehydrogenase (complex II, CII), ubiquinol-cytochrome c oxidoreductase (cytochrome b-c1 complex, complex III, CIII) and cytochrome c oxidase (complex IV, CIV), that cooperate to transfer electrons derived from NADH and succinate to molecular oxygen, creating an electrochemical gradient over the inner membrane that drives transmembrane transport and the ATP synthase. The cytochrome b-c1 complex catalyzes electron transfer from ubiquinol to cytochrome c, linking this redox reaction to translocation of protons across the mitochondrial inner membrane, with protons being carried across the membrane as hydrogens on the quinol. In the process called Q cycle, 2 protons are consumed from the matrix, 4 protons are released into the intermembrane space and 2 electrons are passed to cytochrome c. This chain is Cytochrome b-c1 complex subunit 6-2, mitochondrial (QCR6-2), found in Arabidopsis thaliana (Mouse-ear cress).